A 426-amino-acid chain; its full sequence is SrfA-induced gene K protein (426 aa).

The first 23 residues, 1-23 (MKKMKILSFFILSLAIIIGIVYS), serve as a signal peptide directing secretion. 4 N-linked (GlcNAc...) asparagine glycosylation sites follow: asparagine 64, asparagine 136, asparagine 160, and asparagine 226. Laminin EGF-like domains lie at 325–348 (DNQC…GMVL) and 384–408 (CNGT…GGEV). 3 disulfide bridges follow: cysteine 330/cysteine 339, cysteine 342/cysteine 358, and cysteine 370/cysteine 388. Asparagine 385 is a glycosylation site (N-linked (GlcNAc...) asparagine).

The chain is SrfA-induced gene K protein (sigK) from Dictyostelium discoideum (Social amoeba).